The following is a 287-amino-acid chain: U-megalopygitoxin(8)-Mo12 (287 aa).

The first 17 residues, 1–17, serve as a signal peptide directing secretion; sequence MNLQYLILSLLSTTVYG. His-284 bears the Histidine amide mark.

This sequence belongs to the megalysin family. Contains 2 disulfide bonds. Expressed by the venom apparatus.

The protein localises to the secreted. The protein resides in the target cell membrane. Its function is as follows. May function as a large pore-forming protein. In Megalopyge opercularis (Southern flannel moth), this protein is U-megalopygitoxin(8)-Mo12.